Reading from the N-terminus, the 1135-residue chain is Potassium channel subfamily T member 2 (1135 aa).

Residues 1–63 lie on the Cytoplasmic side of the membrane; it reads MVDLESEVPP…KNQRSSLRIR (63 aa). Residues 64–84 traverse the membrane as a helical segment; sequence LFNFSLKLLSCLLYIIRVLLE. Residues 85 to 101 are Extracellular-facing; sequence KPSQGSEWSHIFWVNRS. A helical membrane pass occupies residues 102 to 122; sequence LPLWGLQVSVALISLFETILL. The Cytoplasmic segment spans residues 123–137; the sequence is GYLSYKGNIWEQILR. The helical transmembrane segment at 138–158 threads the bilayer; sequence IPFILEIINAVPFIISIFWPT. Residues 159 to 164 are Extracellular-facing; the sequence is LRNLFV. The helical transmembrane segment at 165–185 threads the bilayer; that stretch reads PVFLNCWLAKHALENMINDLH. Residues 186 to 198 lie on the Cytoplasmic side of the membrane; the sequence is RAIQRTQSAMFNQ. Residues 199–219 form a helical membrane-spanning segment; that stretch reads VLILISTLLCLIFTCICGIQH. The Extracellular segment spans residues 220–228; the sequence is LERIGKKLN. The pore-forming intramembrane region spans 229–249; sequence LFDSLYFCIVTFSTVGFGDVT. Topologically, residues 250–256 are extracellular; it reads PETWSSK. A helical transmembrane segment spans residues 257-277; sequence LFVVAMICVALVVLPIQFEQL. At 278 to 1135 the chain is on the cytoplasmic side; sequence AYLWMERQKS…VQDSREETQL (858 aa). 2 RCK N-terminal domains span residues 299-435 and 718-858; these read EKHV…DHVV and NKLI…CYSL. Disordered stretches follow at residues 982–1036 and 1111–1135; these read DTKD…AEKI and PNSEPSRKNSICNAAVQDSREETQL. Over residues 1010–1030 the composition is skewed to basic residues; sequence LRRKSMQWARRLSRKGPKHSG. Positions 1111–1122 are enriched in polar residues; that stretch reads PNSEPSRKNSIC.

The protein belongs to the potassium channel family. Calcium-activated (TC 1.A.1.3) subfamily. KCa4.2/KCNT2 sub-subfamily. As to quaternary structure, homotetramer. Forms heteromeric channels with KCNT1. These heterodimer channels differ from the homomers in their unitary conductance, kinetic behavior, subcellular localization, and response to activation of protein kinase C. Phosphorylated by protein kinase C. Phosphorylation of the C-terminal domain inhibits channel activity. Within the dorsal root ganglia (DRGs), exclusively expressed in small-sized and medium-sized calcitonin gene-related peptide (CGRP)-containing DRG neurons.

It is found in the cell membrane. The enzyme catalyses K(+)(in) = K(+)(out). Its activity is regulated as follows. Are normally in a closed state unless activated by an increase in intracellular Na(+) and Cl(-). Inhibited upon stimulation of G-protein coupled receptors, such as CHRM1 and GRM1. There is conflicting data about the effect of ATP on KNCT2 channels activity. Intracellular ATP was initially report to inhibit the channel activity. However, others studies conclude that KNCT2 channels are not inhibited by intracellular ATP. Sodium-activated and chloride-activated potassium channel. Produces rapidly activating outward rectifier K(+) currents. Contributes to regulate neuronal excitability. In Mus musculus (Mouse), this protein is Potassium channel subfamily T member 2 (Kcnt2).